Consider the following 2531-residue polypeptide: Mediator of RNA polymerase II transcription subunit 12 (2531 aa).

Disordered stretches follow at residues 1 to 41 (MLSM…VKHG), 204 to 283 (QNHD…GSVM), 584 to 604 (VSRRREEDQVEPRPPYEPKQD), and 742 to 762 (TTATKTSPPPPAPPPTTTHGF). The segment covering 210–247 (SSNGTTSGSLTAAGNGPASNGSTGTSSINSVTGSSAST) has biased composition (low complexity). The span at 586–604 (RRREEDQVEPRPPYEPKQD) shows a compositional bias: basic and acidic residues. Threonine 745 carries the phosphothreonine modification. 2 positions are modified to phosphoserine: serine 748 and serine 781. The span at 748–757 (SPPPPAPPPT) shows a compositional bias: pro residues. The span at 796 to 805 (EKGQQHEAPD) shows a compositional bias: basic and acidic residues. The disordered stretch occupies residues 796-824 (EKGQQHEAPDSPKIGPPGDGETNPGGSIS). Serine 806 and serine 1356 each carry phosphoserine. Phosphothreonine is present on threonine 1360. Composition is skewed to polar residues over residues 1585–1595 (VSKSDCNSSGS) and 1901–1910 (TPSSVDQSPS). 4 disordered regions span residues 1585–1608 (VSKSDCNSSGSGDEREKSNSCHSS), 1898–2092 (KADT…NQYA), 2114–2218 (QALS…GMAP), and 2469–2508 (MGGGAGGGMGAGPQQGGGAVGGGAGGGMVPQQQSMNQQQT). A compositionally biased stretch (basic residues) spans 1919–1933 (GRGKGTTTRKRKPKN). 2 stretches are compositionally biased toward low complexity: residues 1938–2038 (PVVN…QQLN) and 2045–2055 (QPNPQMNFMQQ). A compositionally biased stretch (gly residues) spans 2056–2066 (GPGGGGAGPQG). 3 stretches are compositionally biased toward low complexity: residues 2067–2080 (MPGQQQQWHNAPQQ), 2121–2132 (RQRQPFQQQAQQ), and 2139–2205 (NPMQ…QQQQ). A compositionally biased stretch (gly residues) spans 2469–2496 (MGGGAGGGMGAGPQQGGGAVGGGAGGGM). Residues 2497–2507 (VPQQQSMNQQQ) are compositionally biased toward low complexity.

It belongs to the Mediator complex subunit 12 family. As to quaternary structure, component of the Cdk8 module of the Mediator complex, composed of CycC, Cdk8, kto and skd.

The protein resides in the nucleus. Component of the Mediator complex, a coactivator involved in regulated gene transcription of nearly all RNA polymerase II-dependent genes. Mediator functions as a bridge to convey information from gene-specific regulatory proteins to the basal RNA polymerase II transcription machinery. Mediator is recruited to promoters by direct interactions with regulatory proteins and serves as a scaffold for the assembly of a functional preinitiation complex with RNA polymerase II and the general transcription factors. Required for leg and eye development and macrochaete specification or differentiation. The polypeptide is Mediator of RNA polymerase II transcription subunit 12 (kto) (Drosophila melanogaster (Fruit fly)).